A 398-amino-acid chain; its full sequence is Protein RecA (398 aa).

83-90 (GPESSGKT) serves as a coordination point for ATP. Residues 351-398 (AGQKNDKKSKLEEKANAGAGISEASEPDSSAEEDFEEFAPIDIGSLGE) form a disordered region. The span at 354–365 (KNDKKSKLEEKA) shows a compositional bias: basic and acidic residues. A compositionally biased stretch (acidic residues) spans 375 to 389 (SEPDSSAEEDFEEFA).

The protein belongs to the RecA family.

The protein localises to the cytoplasm. Can catalyze the hydrolysis of ATP in the presence of single-stranded DNA, the ATP-dependent uptake of single-stranded DNA by duplex DNA, and the ATP-dependent hybridization of homologous single-stranded DNAs. It interacts with LexA causing its activation and leading to its autocatalytic cleavage. In Ruminococcus albus (strain ATCC 27210 / DSM 20455 / JCM 14654 / NCDO 2250 / 7), this protein is Protein RecA.